We begin with the raw amino-acid sequence, 472 residues long: Ribulose bisphosphate carboxylase large chain (472 aa).

Residues N120 and T170 each coordinate substrate. The active-site Proton acceptor is K172. Residue K174 participates in substrate binding. Positions 198, 200, and 201 each coordinate Mg(2+). K198 carries the post-translational modification N6-carboxylysine. Catalysis depends on H291, which acts as the Proton acceptor. Substrate contacts are provided by R292, H324, and S376.

Belongs to the RuBisCO large chain family. Type I subfamily. As to quaternary structure, heterohexadecamer of 8 large chains and 8 small chains. Mg(2+) serves as cofactor.

It localises to the carboxysome. The catalysed reaction is 2 (2R)-3-phosphoglycerate + 2 H(+) = D-ribulose 1,5-bisphosphate + CO2 + H2O. It catalyses the reaction D-ribulose 1,5-bisphosphate + O2 = 2-phosphoglycolate + (2R)-3-phosphoglycerate + 2 H(+). RuBisCO catalyzes two reactions: the carboxylation of D-ribulose 1,5-bisphosphate, the primary event in carbon dioxide fixation, as well as the oxidative fragmentation of the pentose substrate in the photorespiration process. Both reactions occur simultaneously and in competition at the same active site. This is Ribulose bisphosphate carboxylase large chain from Gloeothece citriformis (strain PCC 7424) (Cyanothece sp. (strain PCC 7424)).